The following is a 790-amino-acid chain: Type VI secretion system spike protein VgrG5 (790 aa).

2 stretches are compositionally biased toward basic and acidic residues: residues 753–763 and 772–790; these read GFRDYRAEMPQ and AYRR…EPTP. Residues 753-790 are disordered; it reads GFRDYRAEMPQHKPRSAPDAYRRDASRPGAADKDEPTP.

The protein belongs to the VgrG protein family.

It is found in the secreted. Part of the H2 type VI secretion system (H2-T6SS) specialized secretion system, which delivers several virulence factors in both prokaryotic and eukaryotic cells during infection. Allows the delivery of the phospholipase effector PldB to target cells where it exerts its toxicity. Also plays a role in VgrG4b and its effector PldA secretion. This Pseudomonas aeruginosa (strain ATCC 15692 / DSM 22644 / CIP 104116 / JCM 14847 / LMG 12228 / 1C / PRS 101 / PAO1) protein is Type VI secretion system spike protein VgrG5.